Reading from the N-terminus, the 338-residue chain is Isopentenyl-diphosphate delta-isomerase (338 aa).

13–14 (RK) lines the substrate pocket. Residues 72 to 74 (AMT), serine 102, and asparagine 130 each bind FMN. A substrate-binding site is contributed by 102-104 (SQR). Glutamine 165 lines the substrate pocket. Glutamate 166 provides a ligand contact to Mg(2+). Residues lysine 197, threonine 227, 274 to 276 (GIR), and 295 to 296 (AR) contribute to the FMN site.

Belongs to the IPP isomerase type 2 family. Homooctamer. Dimer of tetramers. FMN serves as cofactor. It depends on NADPH as a cofactor. The cofactor is Mg(2+).

The protein localises to the cytoplasm. It carries out the reaction isopentenyl diphosphate = dimethylallyl diphosphate. Its function is as follows. Involved in the biosynthesis of isoprenoids. Catalyzes the 1,3-allylic rearrangement of the homoallylic substrate isopentenyl (IPP) to its allylic isomer, dimethylallyl diphosphate (DMAPP). The chain is Isopentenyl-diphosphate delta-isomerase from Deinococcus radiodurans (strain ATCC 13939 / DSM 20539 / JCM 16871 / CCUG 27074 / LMG 4051 / NBRC 15346 / NCIMB 9279 / VKM B-1422 / R1).